The chain runs to 801 residues: Probable methionine--tRNA ligase (801 aa).

The 'HIGH' region signature appears at 25–35 (PYVNNVPHLGN). A 'KMSKS' region motif is present at residues 347-351 (KFSKS). ATP is bound at residue Lys350. The interval 606–633 (DKLKGTKLSDGGQKKEQKKQSGGSKSKN) is disordered. In terms of domain architecture, tRNA-binding spans 639–742 (TVAKLDIRVG…ESAAVGERVT (104 aa)).

Belongs to the class-I aminoacyl-tRNA synthetase family.

It localises to the cytoplasm. It catalyses the reaction tRNA(Met) + L-methionine + ATP = L-methionyl-tRNA(Met) + AMP + diphosphate. The protein is Probable methionine--tRNA ligase of Oryza sativa subsp. japonica (Rice).